The sequence spans 740 residues: NAD(P)H-quinone oxidoreductase subunit 5, chloroplastic (740 aa).

A run of 16 helical transmembrane segments spans residues 9–29, 40–60, 89–109, 125–145, 147–167, 185–205, 221–241, 258–278, 283–303, 327–347, 354–374, 396–416, 425–445, 547–567, 606–626, and 718–738; these read WIIP…LLLF, WSFL…YLSI, IDPL…FVLI, FAYM…SNLI, IYFF…FWFT, GDFG…SFEF, VNLL…IAKS, TPIS…FLVA, LFIV…ITIL, LGYM…FHLI, ALLF…VGYS, TAFL…CFWS, LLFS…TAFY, ILFP…IGIP, FSVS…KPFY, and ISSY…FLKI.

It belongs to the complex I subunit 5 family. NDH is composed of at least 16 different subunits, 5 of which are encoded in the nucleus.

It is found in the plastid. The protein localises to the chloroplast thylakoid membrane. It catalyses the reaction a plastoquinone + NADH + (n+1) H(+)(in) = a plastoquinol + NAD(+) + n H(+)(out). The catalysed reaction is a plastoquinone + NADPH + (n+1) H(+)(in) = a plastoquinol + NADP(+) + n H(+)(out). Functionally, NDH shuttles electrons from NAD(P)H:plastoquinone, via FMN and iron-sulfur (Fe-S) centers, to quinones in the photosynthetic chain and possibly in a chloroplast respiratory chain. The immediate electron acceptor for the enzyme in this species is believed to be plastoquinone. Couples the redox reaction to proton translocation, and thus conserves the redox energy in a proton gradient. In Aethionema grandiflorum (Persian stone-cress), this protein is NAD(P)H-quinone oxidoreductase subunit 5, chloroplastic (ndhF).